Reading from the N-terminus, the 325-residue chain is Heat-inducible transcription repressor HrcA (325 aa).

It belongs to the HrcA family.

Its function is as follows. Negative regulator of class I heat shock genes (grpE-dnaK-dnaJ and groELS operons). Prevents heat-shock induction of these operons. This Staphylococcus aureus (strain JH1) protein is Heat-inducible transcription repressor HrcA.